The chain runs to 379 residues: Cathepsin B-like protease 1 (379 aa).

The N-terminal stretch at 1–30 (MADSCCIRLHLLASVFLLLFSSFNLQGIAA) is a signal peptide. Positions 31-102 (ENLSKQKLTS…PIVRHDLSLK (72 aa)) are cleaved as a propeptide — activation peptide. N-linked (GlcNAc...) asparagine glycosylation is found at Asn32 and Asn69. 6 disulfide bridges follow: Cys116/Cys165, Cys148/Cys191, Cys182/Cys236, Cys183/Cys187, Cys213/Cys240, and Cys222/Cys227. Cys151 is a catalytic residue. An N-linked (GlcNAc...) asparagine glycan is attached at Asn171. Residues His306 and Asn327 contribute to the active site. An N-linked (GlcNAc...) asparagine glycan is attached at Asn330. A propeptide spans 363-379 (NVFKGITTSDDLLVSSV) (removed in mature form).

The protein belongs to the peptidase C1 family.

Functionally, thiol protease that plays a central role in plant programmed cell death (PCD). In addition to its role in protein degradation, may cleave and/or degrade a number of target proteins, activating signaling towards PCD. Contributes to the increase of caspase-3-like activity after UV-C-induced PCD and is required for abiotic stress-induced PCD. Functions redundantly with CATHB2 and CATHB3 in basal defense and distinct forms of plant programmed cell death (PCD). Participates in the establishment of basal resistance against the bacterial pathogen Pseudomonase syringae pv. tomato DC3000. Required for full levels of PCD during resistance (R) gene-mediated hypersensitive response (HR). Involved in the regulation of senescence, a developmental form of PCD in plants. In Arabidopsis thaliana (Mouse-ear cress), this protein is Cathepsin B-like protease 1.